We begin with the raw amino-acid sequence, 505 residues long: ATP synthase subunit alpha, cyanelle (505 aa).

170–177 provides a ligand contact to ATP; sequence GDRQTGKT.

The protein belongs to the ATPase alpha/beta chains family. F-type ATPases have 2 components, CF(1) - the catalytic core - and CF(0) - the membrane proton channel. CF(1) has five subunits: alpha(3), beta(3), gamma(1), delta(1), epsilon(1). CF(0) has four main subunits: a, b, b' and c.

Its subcellular location is the plastid. The protein resides in the cyanelle thylakoid membrane. It carries out the reaction ATP + H2O + 4 H(+)(in) = ADP + phosphate + 5 H(+)(out). Its function is as follows. Produces ATP from ADP in the presence of a proton gradient across the membrane. The alpha chain is a regulatory subunit. The polypeptide is ATP synthase subunit alpha, cyanelle (Cyanophora paradoxa).